A 612-amino-acid chain; its full sequence is UvrABC system protein C (612 aa).

In terms of domain architecture, GIY-YIG spans 18–96 (TRPGVYRMMD…IKTLKPPYNI (79 aa)). The UVR domain maps to 208–243 (PEIINETIQQMEVASAQLDFERAAVLRDQVDYLRRV).

It belongs to the UvrC family. Interacts with UvrB in an incision complex.

It localises to the cytoplasm. The UvrABC repair system catalyzes the recognition and processing of DNA lesions. UvrC both incises the 5' and 3' sides of the lesion. The N-terminal half is responsible for the 3' incision and the C-terminal half is responsible for the 5' incision. The polypeptide is UvrABC system protein C (Hahella chejuensis (strain KCTC 2396)).